Reading from the N-terminus, the 604-residue chain is Proline--tRNA ligase (604 aa).

It belongs to the class-II aminoacyl-tRNA synthetase family. ProS type 1 subfamily. Homodimer.

Its subcellular location is the cytoplasm. The enzyme catalyses tRNA(Pro) + L-proline + ATP = L-prolyl-tRNA(Pro) + AMP + diphosphate. Functionally, catalyzes the attachment of proline to tRNA(Pro) in a two-step reaction: proline is first activated by ATP to form Pro-AMP and then transferred to the acceptor end of tRNA(Pro). As ProRS can inadvertently accommodate and process non-cognate amino acids such as alanine and cysteine, to avoid such errors it has two additional distinct editing activities against alanine. One activity is designated as 'pretransfer' editing and involves the tRNA(Pro)-independent hydrolysis of activated Ala-AMP. The other activity is designated 'posttransfer' editing and involves deacylation of mischarged Ala-tRNA(Pro). The misacylated Cys-tRNA(Pro) is not edited by ProRS. This is Proline--tRNA ligase from Trichormus variabilis (strain ATCC 29413 / PCC 7937) (Anabaena variabilis).